A 262-amino-acid polypeptide reads, in one-letter code: Histone chaperone cia1 (262 aa).

The disordered stretch occupies residues Ile157–Gln262. 2 coiled-coil regions span residues Asp173 to Gly196 and Lys223 to Lys253. Acidic residues-rich tracts occupy residues Asp173–Glu219 and Glu226–Ser242. Positions Ala250 to Gln262 are enriched in basic and acidic residues.

The protein belongs to the ASF1 family. As to quaternary structure, interacts with histone H3 and histone H4.

It localises to the nucleus. Histone chaperone that facilitates histone deposition and histone exchange and removal during nucleosome assembly and disassembly. In Schizosaccharomyces pombe (strain 972 / ATCC 24843) (Fission yeast), this protein is Histone chaperone cia1 (cia1).